The primary structure comprises 628 residues: Keratin, type II cytoskeletal 3 (628 aa).

Residues 1-21 form a disordered region; sequence MSRQASKTSGGGSQGFSGRSA. The interval 1 to 197 is head; it reads MSRQASKTSG…DPQIGQVKAQ (197 aa). Phosphoserine occurs at positions 13 and 56. The coil 1A stretch occupies residues 198–233; it reads EREQIKTLNNKFASFIDKVRFLEQQNKVLETKWNLL. The IF rod domain occupies 198-513; the sequence is EREQIKTLNN…KLLEGEEYRM (316 aa). The linker 1 stretch occupies residues 234–254; that stretch reads QQQGTSSISGTNNLEPLFENH. The interval 255–346 is coil 1B; it reads INYLRSYLDN…TLYDAELSQM (92 aa). The residue at position 296 (lysine 296) is an N6,N6-dimethyllysine. Residues 347–370 form a linker 12 region; it reads QSHISDTSVVLSMDNNRSLDLDSI. Serine 364 carries the phosphoserine modification. The interval 371-509 is coil 2; sequence IAEVRAQYED…ATYRKLLEGE (139 aa). Residues 510–628 are tail; that stretch reads EYRMSGECPS…SSQSSQRYSR (119 aa). The interval 605–628 is disordered; that stretch reads SSASNRGGSIKFSQSSQSSQRYSR. A compositionally biased stretch (low complexity) spans 617–628; it reads SQSSQSSQRYSR.

The protein belongs to the intermediate filament family. As to quaternary structure, heterotetramer of two type I and two type II keratins. Keratin-3 associates with keratin-12. In terms of tissue distribution, cornea specific.

This is Keratin, type II cytoskeletal 3 (KRT3) from Homo sapiens (Human).